The following is a 475-amino-acid chain: MTNDTWNEVRQDLLKVVGKNNFSAWIEPIDFDRIDERTAHFHVPTNFIGSWVTNNFGDLILRQLSAHGAGADRVKFTVSPKAGAAVAAPANTSAPRPVPEMAAAAPAPAPVHHTAPAPAPVAAPAQPRELPGAKLNPNFTFANFVVGKPNELAHAAARRVAETLDVTFNPLFLYGGVGLGKTHLMHAIAWDLQDRHPDAKILFLSAEQFMHRFVRALREQDTFNFKETFRSVDILMVDDVQFIAGKTSTQQEFFHTFNALVEMGKQIVISGDRAPVDMEELDNRIASRLQCGLVVDIHPTDYELRLGVLQHKAELLGAKYPHITFATGVLEYLAQKISSNVRVLEGALTRLFAFADLVRREVTVDLAKECLTDVLRATDKKVTMDEILKKTCEYYKIRQVDMISQNRQRVIARPRQMAMYLCKRLTTRSLPEIGKKFGGRDHTTILYGVRKIEELMQADSQIAEDAELLRRTLEA.

The tract at residues 1–71 (MTNDTWNEVR…RQLSAHGAGA (71 aa)) is domain I, interacts with DnaA modulators. Residues 71–133 (ADRVKFTVSP…PAQPRELPGA (63 aa)) form a domain II region. The segment covering 107–127 (APAPVHHTAPAPAPVAAPAQP) has biased composition (low complexity). The segment at 107-129 (APAPVHHTAPAPAPVAAPAQPRE) is disordered. Residues 134-355 (KLNPNFTFAN…GALTRLFAFA (222 aa)) form a domain III, AAA+ region region. Gly-178, Gly-180, Lys-181, and Thr-182 together coordinate ATP. A domain IV, binds dsDNA region spans residues 356–475 (DLVRREVTVD…AELLRRTLEA (120 aa)).

It belongs to the DnaA family. Oligomerizes as a right-handed, spiral filament on DNA at oriC.

The protein localises to the cytoplasm. Functionally, plays an essential role in the initiation and regulation of chromosomal replication. ATP-DnaA binds to the origin of replication (oriC) to initiate formation of the DNA replication initiation complex once per cell cycle. Binds the DnaA box (a 9 base pair repeat at the origin) and separates the double-stranded (ds)DNA. Forms a right-handed helical filament on oriC DNA; dsDNA binds to the exterior of the filament while single-stranded (ss)DNA is stabiized in the filament's interior. The ATP-DnaA-oriC complex binds and stabilizes one strand of the AT-rich DNA unwinding element (DUE), permitting loading of DNA polymerase. After initiation quickly degrades to an ADP-DnaA complex that is not apt for DNA replication. Binds acidic phospholipids. The chain is Chromosomal replication initiator protein DnaA from Jannaschia sp. (strain CCS1).